A 425-amino-acid chain; its full sequence is Decarboxylase flvG (425 aa).

Lys-82 carries the N6-(pyridoxal phosphate)lysine modification. Residues Ser-213, Gly-250, and 281 to 284 (EPGR) contribute to the pyridoxal 5'-phosphate site. 331–332 (FE) is a substrate binding site. The active-site Proton donor; shared with dimeric partner is Cys-365. Asp-366 is a binding site for substrate. Residue Tyr-395 coordinates pyridoxal 5'-phosphate.

The protein belongs to the Orn/Lys/Arg decarboxylase class-II family. As to quaternary structure, homodimer. Only the dimer is catalytically active, as the active sites are constructed of residues from both monomers. Pyridoxal 5'-phosphate is required as a cofactor.

Its subcellular location is the cytoplasm. The catalysed reaction is N(6),N(6)-dimethyl-L-lysine + H(+) = N,N-dimethyl-cadaverine + CO2. It participates in secondary metabolite biosynthesis; terpenoid biosynthesis. Functionally, decarboxylase; part of the gene cluster that mediates the biosynthesis of flavunoidine, an alkaloidal terpenoid with a tetracyclic cage-like core connected to dimethylcadaverine via a C-N bond and acylated with 5,5-dimethyl-L-pipecolate. The tetracyclic core is synthesized by the terpene cyclase flvE and the cytochrome P450 monooxygenase flvD. The terpene cyclase flvE catalyzes the cyclization of farnesyl pyrophosphate (FPP) to form (1R,4R,5S)-(+)-acoradiene and the cytochrome P450 monooxygenase flvD is then responsible for oxidative conversion of (1R,4R,5S)-(+)-acoradiene into the tetracyclic cage present in the final product flavunoidine. In parallel, the N-methyltransferase flvH dimethylates L-lysine to give N,N-dimethyl-L-Lysin which is decarboxylated by flvG to afford dimethylcadaverine. The terpene cyclase-like protein flvF is the enzyme that attaches the dimethylcadaverine precusor at the C-7 of the tetracyclic cage to yield pre-flavunoidine. The cytochrome monooxygenase flvC hydroxylates the C-10 position of pre-flavunoidine whereas the NRPS flvI acylates the terpenoid core at the hydroxylated C-10 with dimethylpipecolate to yield final flavunoidine. The bifunctional enzyme flvA and the dehydrogenase flvB are responsible for the synthesis of the dimethylpipecolate precursor. The PLP-dependent lyase domain of flvA might use L-O-acetyl-homoserine and alpha-keto-isovalerate to form an intermediary ketone that can cyclize intramolecularly to yield an imine. The imine can be reduced by flvB to yield the 6-carboxylated pipecolate. The C-terminal alpha-KG-dependent oxygenase domain of flvA is then proposed to catalyze the decarboxylation to yield dimethylpipecolate. The polypeptide is Decarboxylase flvG (Aspergillus flavus (strain ATCC 200026 / FGSC A1120 / IAM 13836 / NRRL 3357 / JCM 12722 / SRRC 167)).